The following is a 250-amino-acid chain: Leucyl/phenylalanyl-tRNA--protein transferase (250 aa).

It belongs to the L/F-transferase family.

The protein resides in the cytoplasm. The catalysed reaction is N-terminal L-lysyl-[protein] + L-leucyl-tRNA(Leu) = N-terminal L-leucyl-L-lysyl-[protein] + tRNA(Leu) + H(+). It carries out the reaction N-terminal L-arginyl-[protein] + L-leucyl-tRNA(Leu) = N-terminal L-leucyl-L-arginyl-[protein] + tRNA(Leu) + H(+). It catalyses the reaction L-phenylalanyl-tRNA(Phe) + an N-terminal L-alpha-aminoacyl-[protein] = an N-terminal L-phenylalanyl-L-alpha-aminoacyl-[protein] + tRNA(Phe). Its function is as follows. Functions in the N-end rule pathway of protein degradation where it conjugates Leu, Phe and, less efficiently, Met from aminoacyl-tRNAs to the N-termini of proteins containing an N-terminal arginine or lysine. The sequence is that of Leucyl/phenylalanyl-tRNA--protein transferase from Bordetella avium (strain 197N).